We begin with the raw amino-acid sequence, 371 residues long: MSFRKVTIIIWALAVILFLLALHHNFLSLSSLLRNDVSDSGIVGLQPIDFTANFHQHPVNERQEEIPVVIAASEDRLGGTIAAINSIHQNTRSNVIFYIVTFNRTADHLRSWLNSGSLKSIRYKIVNFDTKLLEGKVKEDPDQGESMKPLTFARFYLPILVPSAKKAIYMDDDVIVQGDILALYNTPLKPGHAAAFSEDCDSASTKVMIRGAGNQYNYIGYLDYKKERIRKLSMKASTCSFNPGVFVANLTEWKRQNVTNQLEKWMKLNVEEGLYSRTLAGSITTPPLLIVFYQQHSTIDPMWNVRHLGSSAGKRYSPQFVKAAKLLHWNGHFKPWGRAASYADVWEKWYIPDPTGKFSLIRRHMDTSNIK.

Residues 1–5 (MSFRK) are Cytoplasmic-facing. A helical; Signal-anchor for type II membrane protein membrane pass occupies residues 6–26 (VTIIIWALAVILFLLALHHNF). Topologically, residues 27-371 (LSLSSLLRND…RRHMDTSNIK (345 aa)) are lumenal. An N-linked (GlcNAc...) asparagine glycan is attached at asparagine 257.

Belongs to the glycosyltransferase 8 family.

Its subcellular location is the membrane. The chain is Glycosyltransferase 8 domain-containing protein 1 (Glt8d1) from Rattus norvegicus (Rat).